The chain runs to 261 residues: Na(+)-translocating NADH-quinone reductase subunit C (261 aa).

A helical membrane pass occupies residues 12-32 (LGVVVGLSLVCSIIVSTAAVG). Thr-229 is subject to FMN phosphoryl threonine.

As to quaternary structure, composed of six subunits; NqrA, NqrB, NqrC, NqrD, NqrE and NqrF. FMN is required as a cofactor.

The protein localises to the cell inner membrane. The catalysed reaction is a ubiquinone + n Na(+)(in) + NADH + H(+) = a ubiquinol + n Na(+)(out) + NAD(+). NQR complex catalyzes the reduction of ubiquinone-1 to ubiquinol by two successive reactions, coupled with the transport of Na(+) ions from the cytoplasm to the periplasm. NqrA to NqrE are probably involved in the second step, the conversion of ubisemiquinone to ubiquinol. This is Na(+)-translocating NADH-quinone reductase subunit C from Vibrio campbellii (strain ATCC BAA-1116).